We begin with the raw amino-acid sequence, 647 residues long: Spindle pole body-associated protein VIK1 (647 aa).

The span at 36–51 shows a compositional bias: polar residues; the sequence is NTTNTMNGSRPSSMKS. The interval 36–55 is disordered; the sequence is NTTNTMNGSRPSSMKSSLAL. A coiled-coil region spans residues 202 to 350; it reads DHEITEEISQ…SKQEKFYNDT (149 aa).

Interacts with KAR3; the interaction is direct.

Its subcellular location is the cytoplasm. The protein resides in the cytoskeleton. It is found in the microtubule organizing center. The protein localises to the spindle pole body. It localises to the nucleus. Functionally, together with the minus end-directed microtubule motor KAR3, plays a role in microtubule organization. Recruits KAR3 to microtubules, and together they may stabilize the polymers. The KAR3-VIK1 heterodimer cross-links anti-parallel microtubules. Targets and/or maintains KAR3 at the spindle pole body during vegetative growth. This chain is Spindle pole body-associated protein VIK1 (VIK1), found in Saccharomyces cerevisiae (strain ATCC 204508 / S288c) (Baker's yeast).